The following is a 568-amino-acid chain: Sphingosine-1-phosphate lyase 1 (568 aa).

Over 1-40 (MPSTDLLMLKAFEPYLEILEVYSTKAKNYVNGHCTKYEPW) the chain is Lumenal. Residues 41–61 (QLIAWSVVWTLLIVWGYEFVF) traverse the membrane as a helical; Signal-anchor for type III membrane protein segment. Topologically, residues 62–568 (QPESLWSRFK…SQMNGSPKPH (507 aa)) are cytoplasmic. At lysine 353 the chain carries N6-(pyridoxal phosphate)lysine; alternate. Lysine 353 is subject to N6-acetyllysine; alternate. Tyrosine 356 and tyrosine 366 each carry 3'-nitrotyrosine. Position 564 is a phosphoserine (serine 564).

The protein belongs to the group II decarboxylase family. Sphingosine-1-phosphate lyase subfamily. As to quaternary structure, homodimer. Pyridoxal 5'-phosphate is required as a cofactor. Ubiquitously expressed. Expressed in fetal and adult adrenal gland (at protein level).

The protein resides in the endoplasmic reticulum membrane. It catalyses the reaction sphinganine 1-phosphate = hexadecanal + phosphoethanolamine. The enzyme catalyses sphing-4-enine 1-phosphate = (2E)-hexadecenal + phosphoethanolamine. Its pathway is lipid metabolism; sphingolipid metabolism. Its function is as follows. Cleaves phosphorylated sphingoid bases (PSBs), such as sphingosine-1-phosphate, into fatty aldehydes and phosphoethanolamine. Elevates stress-induced ceramide production and apoptosis. Required for global lipid homeostasis in liver and cholesterol homeostasis in fibroblasts. Involved in the regulation of pro-inflammatory response and neutrophil trafficking. Modulates neuronal autophagy via phosphoethanolamine production which regulates accumulation of aggregate-prone proteins such as APP. Seems to play a role in establishing neuronal contact sites and axonal maintenance. This is Sphingosine-1-phosphate lyase 1 from Homo sapiens (Human).